Reading from the N-terminus, the 121-residue chain is MATKMVIVVRTDLDMGKGKIAAQVAHAAVSLVLDILNSSNSLWKEWLYKWLEEGQPKIVVKVPSLDELNKRYEKAIELNLPTTIIQDAGKTQIEPGTITCIGIGPAPVELVDKITGDLKLL.

The protein belongs to the PTH2 family.

It localises to the cytoplasm. It catalyses the reaction an N-acyl-L-alpha-aminoacyl-tRNA + H2O = an N-acyl-L-amino acid + a tRNA + H(+). The natural substrate for this enzyme may be peptidyl-tRNAs which drop off the ribosome during protein synthesis. The sequence is that of Peptidyl-tRNA hydrolase from Sulfurisphaera tokodaii (strain DSM 16993 / JCM 10545 / NBRC 100140 / 7) (Sulfolobus tokodaii).